Consider the following 151-residue polypeptide: GTP-dependent dephospho-CoA kinase (151 aa).

Aspartate 30, valine 31, aspartate 49, lysine 51, and glutamate 104 together coordinate GTP.

It belongs to the GTP-dependent DPCK family.

It catalyses the reaction 3'-dephospho-CoA + GTP = GDP + CoA + H(+). It functions in the pathway cofactor biosynthesis; coenzyme A biosynthesis. Catalyzes the GTP-dependent phosphorylation of the 3'-hydroxyl group of dephosphocoenzyme A to form coenzyme A (CoA). This Cenarchaeum symbiosum (strain A) protein is GTP-dependent dephospho-CoA kinase.